The primary structure comprises 313 residues: MSFLNTIRGLGRGSKKNKKDLEPSNNAIYSHSNLSGNGLRRTQSPTKFSPSKLSSKGAQGSAAYTSSPTKRSRTGQSLQHQDSQSSLQYQQQSGSVSPSKRSSIQTTKSTTVNADPPLFLCEPYVKTALVKGSFKTIVQLPKYVDYCEWLALNIFELFNHLNRFYGVIQEYATPEAYPTMNAGPNTNYLWVNSSGQAVNLPACQYIEYVITWVTNKLNDQSVFPTKNGGAFPPNFIKDCKNISRQMFRIFAHIYHNHFDKIIHLSLEAHWNSFFAHFISFVKEFNLIDRTEMEPLLPLIENFEQQGKITQASK.

The interval 1 to 109 is disordered; the sequence is MSFLNTIRGL…KRSSIQTTKS (109 aa). Over residues 23 to 69 the composition is skewed to polar residues; that stretch reads PSNNAIYSHSNLSGNGLRRTQSPTKFSPSKLSSKGAQGSAAYTSSPT. 4 positions are modified to phosphoserine; by CDC28: Ser44, Ser51, Ser67, and Ser97. A compositionally biased stretch (low complexity) spans 76–97; it reads QSLQHQDSQSSLQYQQQSGSVS. Residues 98 to 109 are compositionally biased toward polar residues; sequence PSKRSSIQTTKS.

The protein belongs to the MOB1/phocein family. As to quaternary structure, interacts with protein kinase CBK1 to form the RAM CBK1-MOB2 kinase complex. Post-translationally, phosphorylated by CDC28 at Ser-44, Ser-51, Ser-67, and Ser-97. Phosphorylation occurs during bud emergence and is maintained until the G2/M transition. Dephosphorylated at the end of mitosis. Phosphorylation is required for the maintenance of polarisome components in hyphae.

The protein localises to the nucleus. It localises to the cytoplasm. Functionally, functions as an activator subunit for the CBK1 protein kinase. Part of the regulation of ACE2 activity and cellular morphogenesis (RAM) signaling network. The RAM network is critically required for hyphal growth as well as normal vegetative growth, and for polarization of lipid rafts and the actin cytoskeleton. It play an essential role in biofilm formation. The RAM network also plays a role in serum- and antifungal azoles-induced activation of ergosterol biosynthesis genes, especially those involved in the late steps of ergosterol biosynthesis. This Candida albicans (strain SC5314 / ATCC MYA-2876) (Yeast) protein is CBK1 kinase activator protein MOB2 (MOB2).